The primary structure comprises 41 residues: Large ribosomal subunit protein bL36 (41 aa).

This sequence belongs to the bacterial ribosomal protein bL36 family.

The protein is Large ribosomal subunit protein bL36 of Bartonella henselae (strain ATCC 49882 / DSM 28221 / CCUG 30454 / Houston 1) (Rochalimaea henselae).